The sequence spans 238 residues: Transcription factor MYB27 (238 aa).

HTH myb-type domains follow at residues 6-58 (EETL…MNYL) and 59-113 (NPTL…RKKQ). A Nuclear localization signal motif is present at residues 31–38 (ERRWDSLA). 2 consecutive DNA-binding regions (H-T-H motif) follow at residues 34-58 (WDSL…MNYL) and 86-109 (WSKI…RTHY).

The protein resides in the nucleus. This is Transcription factor MYB27 from Arabidopsis thaliana (Mouse-ear cress).